Consider the following 248-residue polypeptide: Ribosomal RNA small subunit methyltransferase G (248 aa).

Residues G85, F90, 108–110, 137–138, and R156 each bind S-adenosyl-L-methionine; these read DSS and AE.

It belongs to the methyltransferase superfamily. RNA methyltransferase RsmG family.

Its subcellular location is the cytoplasm. Specifically methylates the N7 position of a guanine in 16S rRNA. In Prochlorococcus marinus (strain NATL1A), this protein is Ribosomal RNA small subunit methyltransferase G.